The following is a 136-amino-acid chain: Large ribosomal subunit protein bL19 (136 aa).

The interval 1–23 (MEETVNNQETPETSEEETADEET) is disordered. A compositionally biased stretch (acidic residues) spans 12 to 23 (ETSEEETADEET).

Belongs to the bacterial ribosomal protein bL19 family.

Its function is as follows. This protein is located at the 30S-50S ribosomal subunit interface and may play a role in the structure and function of the aminoacyl-tRNA binding site. This chain is Large ribosomal subunit protein bL19, found in Dehalococcoides mccartyi (strain ATCC BAA-2266 / KCTC 15142 / 195) (Dehalococcoides ethenogenes (strain 195)).